The primary structure comprises 106 residues: uncharacterized protein (106 aa).

The disordered stretch occupies residues 54–106 (RSTLVATSPRRRSLVQQRRPPLREQNGGSGSSCVSSGGSASTVKTPGSRRASK). Low complexity predominate over residues 84 to 94 (SSCVSSGGSAS).

This is an uncharacterized protein from Human adenovirus C serotype 2 (HAdV-2).